The following is a 138-amino-acid chain: Holo-[acyl-carrier-protein] synthase (138 aa).

Mg(2+) is bound by residues Asp8 and Glu57.

This sequence belongs to the P-Pant transferase superfamily. AcpS family. Mg(2+) serves as cofactor.

The protein resides in the cytoplasm. It carries out the reaction apo-[ACP] + CoA = holo-[ACP] + adenosine 3',5'-bisphosphate + H(+). Transfers the 4'-phosphopantetheine moiety from coenzyme A to a Ser of acyl-carrier-protein. This is Holo-[acyl-carrier-protein] synthase from Phenylobacterium zucineum (strain HLK1).